The chain runs to 269 residues: Tryptophan synthase alpha chain (269 aa).

Active-site proton acceptor residues include Glu49 and Asp60.

Belongs to the TrpA family. Tetramer of two alpha and two beta chains.

It carries out the reaction (1S,2R)-1-C-(indol-3-yl)glycerol 3-phosphate + L-serine = D-glyceraldehyde 3-phosphate + L-tryptophan + H2O. It participates in amino-acid biosynthesis; L-tryptophan biosynthesis; L-tryptophan from chorismate: step 5/5. Functionally, the alpha subunit is responsible for the aldol cleavage of indoleglycerol phosphate to indole and glyceraldehyde 3-phosphate. In Pseudomonas putida (Arthrobacter siderocapsulatus), this protein is Tryptophan synthase alpha chain.